We begin with the raw amino-acid sequence, 96 residues long: Putative membrane protein insertion efficiency factor (96 aa).

Low complexity predominate over residues 71–84 (THGTAAAPPASAAP). Residues 71–96 (THGTAAAPPASAAPGRPPVTVRLPRP) are disordered.

It belongs to the UPF0161 family.

It localises to the cell inner membrane. In terms of biological role, could be involved in insertion of integral membrane proteins into the membrane. This chain is Putative membrane protein insertion efficiency factor, found in Cupriavidus metallidurans (strain ATCC 43123 / DSM 2839 / NBRC 102507 / CH34) (Ralstonia metallidurans).